We begin with the raw amino-acid sequence, 61 residues long: Small ribosomal subunit protein uS14 (61 aa).

The Zn(2+) site is built by cysteine 24, cysteine 27, cysteine 40, and cysteine 43.

It belongs to the universal ribosomal protein uS14 family. Zinc-binding uS14 subfamily. In terms of assembly, part of the 30S ribosomal subunit. Contacts proteins S3 and S10. The cofactor is Zn(2+).

Its function is as follows. Binds 16S rRNA, required for the assembly of 30S particles and may also be responsible for determining the conformation of the 16S rRNA at the A site. In Carboxydothermus hydrogenoformans (strain ATCC BAA-161 / DSM 6008 / Z-2901), this protein is Small ribosomal subunit protein uS14.